The primary structure comprises 199 residues: MRAVIIDYGVGNLFSIYSGLRRVGFEVEISKEPKGSEDLIVFPGVGSFSAVSKYLVARKEKFEVLRSNGTGFLGICLGMQIMFEEGTEGGLNKGLGWLKGRVDKINHPRVKIPHIGWDKVNVIKYNELSEGIDDQYVYYAHSYVAYPTDKSVILSTTSYGIDYPAVVNIGNIVGTQFHPEKSSLVGRKFLTNVYRWLRK.

The Glutamine amidotransferase type-1 domain maps to 2–199 (RAVIIDYGVG…LTNVYRWLRK (198 aa)). The active-site Nucleophile is C76. Residues H178 and E180 contribute to the active site.

Heterodimer of HisH and HisF.

It is found in the cytoplasm. The enzyme catalyses 5-[(5-phospho-1-deoxy-D-ribulos-1-ylimino)methylamino]-1-(5-phospho-beta-D-ribosyl)imidazole-4-carboxamide + L-glutamine = D-erythro-1-(imidazol-4-yl)glycerol 3-phosphate + 5-amino-1-(5-phospho-beta-D-ribosyl)imidazole-4-carboxamide + L-glutamate + H(+). It catalyses the reaction L-glutamine + H2O = L-glutamate + NH4(+). It participates in amino-acid biosynthesis; L-histidine biosynthesis; L-histidine from 5-phospho-alpha-D-ribose 1-diphosphate: step 5/9. In terms of biological role, IGPS catalyzes the conversion of PRFAR and glutamine to IGP, AICAR and glutamate. The HisH subunit catalyzes the hydrolysis of glutamine to glutamate and ammonia as part of the synthesis of IGP and AICAR. The resulting ammonia molecule is channeled to the active site of HisF. The polypeptide is Imidazole glycerol phosphate synthase subunit HisH (Sulfolobus acidocaldarius (strain ATCC 33909 / DSM 639 / JCM 8929 / NBRC 15157 / NCIMB 11770)).